A 545-amino-acid chain; its full sequence is Ubiquitin carboxyl-terminal hydrolase 17-like protein D (545 aa).

One can recognise a USP domain in the interval 51 to 348; it reads CGLQNTGNSC…NAYVLFYVQQ (298 aa). C60 acts as the Nucleophile in catalysis. H307 functions as the Proton acceptor in the catalytic mechanism. 2 disordered regions span residues 367–443 and 521–545; these read LDPE…KLGQ and RQEG…LLVR. Residues 374–385 are compositionally biased toward basic residues; it reads KKSRRKKHKKKS. Residues 393 to 404 are compositionally biased toward basic and acidic residues; the sequence is EPSKNREKKATK. Over residues 524-537 the composition is skewed to basic residues; that stretch reads GRRRSKKGKNKNKQ.

Belongs to the peptidase C19 family. USP17 subfamily. In terms of tissue distribution, detected in T-cell, myeloid, and embryonic stem cell lines.

The protein localises to the nucleus. Its subcellular location is the endoplasmic reticulum. It carries out the reaction Thiol-dependent hydrolysis of ester, thioester, amide, peptide and isopeptide bonds formed by the C-terminal Gly of ubiquitin (a 76-residue protein attached to proteins as an intracellular targeting signal).. In terms of biological role, deubiquitinating enzyme that removes conjugated ubiquitin from specific proteins to regulate different cellular processes that may include cell proliferation, progression through the cell cycle, apoptosis, cell migration, and the cellular response to viral infection. The polypeptide is Ubiquitin carboxyl-terminal hydrolase 17-like protein D (Mus musculus (Mouse)).